A 352-amino-acid polypeptide reads, in one-letter code: tRNA (guanine-N(1)-)-methyltransferase (352 aa).

S-adenosyl-L-methionine contacts are provided by residues glycine 109 and 129-134 (IGDYVL).

It belongs to the RNA methyltransferase TrmD family. Homodimer.

It is found in the cytoplasm. It catalyses the reaction guanosine(37) in tRNA + S-adenosyl-L-methionine = N(1)-methylguanosine(37) in tRNA + S-adenosyl-L-homocysteine + H(+). Its function is as follows. Specifically methylates guanosine-37 in various tRNAs. This is tRNA (guanine-N(1)-)-methyltransferase from Chlamydia trachomatis serovar L2 (strain ATCC VR-902B / DSM 19102 / 434/Bu).